We begin with the raw amino-acid sequence, 818 residues long: Cation/H(+) antiporter 6A (818 aa).

The next 13 membrane-spanning stretches (helical) occupy residues 51-71 (NFWEYPLPNLEILIFSTFFIW), 88-110 (FTYMMIAGIILGQTCHFSNKSWI), 123-143 (VAETLGAFGFVLYWFLKGVTM), 156-176 (SVIGFITVIIPLICGSLTFRY), 192-212 (LIIFLQSISAFTSIDTLLKDL), 222-242 (IALSGAMVTDMLAFGVTFFNA), 248-268 (LYGFMQTVGFCLFVVVMICVV), 288-308 (FYLYSIFGIAFACFTFFNKVI), 310-330 (LFGPAGSFVFGLTVPNGYPLG), 340-360 (FNLGSILPLFGSLTMMQVDLL), 376-396 (IYEVISFILLVNTTKFVVTTI), 409-429 (FALALVLSNKGIFELAYYTYA), and 438-458 (EVFTILAAYTLLNSIFIPMLL).

This sequence belongs to the monovalent cation:proton antiporter 2 (CPA2) transporter (TC 2.A.37) family. CHX (TC 2.A.37.4) subfamily. In terms of tissue distribution, preferentially expressed in pollen.

Its subcellular location is the membrane. May operate as a cation/H(+) antiporter. The polypeptide is Cation/H(+) antiporter 6A (CHX6a) (Arabidopsis thaliana (Mouse-ear cress)).